The chain runs to 75 residues: DNA-directed RNA polymerase subunit epsilon (75 aa).

It belongs to the RNA polymerase subunit epsilon family. RNAP is composed of a core of 2 alpha, a beta and a beta' subunit. The core is associated with a delta subunit, and at least one of epsilon or omega. When a sigma factor is associated with the core the holoenzyme is formed, which can initiate transcription.

The enzyme catalyses RNA(n) + a ribonucleoside 5'-triphosphate = RNA(n+1) + diphosphate. In terms of biological role, a non-essential component of RNA polymerase (RNAP). The chain is DNA-directed RNA polymerase subunit epsilon from Lactobacillus gasseri (strain ATCC 33323 / DSM 20243 / BCRC 14619 / CIP 102991 / JCM 1131 / KCTC 3163 / NCIMB 11718 / NCTC 13722 / AM63).